The following is a 101-amino-acid chain: Citrate lyase acyl carrier protein (101 aa).

Ser14 bears the O-(phosphoribosyl dephospho-coenzyme A)serine mark.

The protein belongs to the CitD family. Oligomer with a subunit composition of (alpha,beta,gamma)6.

Its subcellular location is the cytoplasm. Its function is as follows. Covalent carrier of the coenzyme of citrate lyase. The sequence is that of Citrate lyase acyl carrier protein from Clostridium perfringens (strain 13 / Type A).